Reading from the N-terminus, the 354-residue chain is UDP-3-O-acylglucosamine N-acyltransferase (354 aa).

Catalysis depends on histidine 258, which acts as the Proton acceptor.

This sequence belongs to the transferase hexapeptide repeat family. LpxD subfamily. In terms of assembly, homotrimer.

It carries out the reaction a UDP-3-O-[(3R)-3-hydroxyacyl]-alpha-D-glucosamine + a (3R)-hydroxyacyl-[ACP] = a UDP-2-N,3-O-bis[(3R)-3-hydroxyacyl]-alpha-D-glucosamine + holo-[ACP] + H(+). The protein operates within bacterial outer membrane biogenesis; LPS lipid A biosynthesis. Catalyzes the N-acylation of UDP-3-O-acylglucosamine using 3-hydroxyacyl-ACP as the acyl donor. Is involved in the biosynthesis of lipid A, a phosphorylated glycolipid that anchors the lipopolysaccharide to the outer membrane of the cell. The protein is UDP-3-O-acylglucosamine N-acyltransferase of Rhizobium meliloti (strain 1021) (Ensifer meliloti).